Consider the following 856-residue polypeptide: Vomeronasal type-2 receptor 116 (856 aa).

The first 18 residues, 1 to 18, serve as a signal peptide directing secretion; the sequence is MFTLIFLFLFLNIPLLVA. Residues 19–586 are Extracellular-facing; it reads DFISPRCFWK…VFLSYEEPLG (568 aa). Residue Asn-94 is glycosylated (N-linked (GlcNAc...) asparagine). Residues 587-607 traverse the membrane as a helical segment; it reads VALSLLSLCFSAFTTVVLGIF. Over 608–622 the chain is Cytoplasmic; it reads VKHHNTPIVKANNRT. The helical transmembrane segment at 623 to 643 threads the bilayer; that stretch reads LTYLLLISLIFCFLCPLLFIG. Over 644 to 658 the chain is Extracellular; it reads HPNSATCILQQLTFG. A helical membrane pass occupies residues 659 to 679; that stretch reads VVFTVSLSTVLAKTITVVLAF. Over 680 to 690 the chain is Cytoplasmic; the sequence is KIIASQRMMKY. The helical transmembrane segment at 691–711 threads the bilayer; the sequence is FLISGAINYIIPICILIQVIV. At 712-745 the chain is on the extracellular side; the sequence is CAVWLRASPPSVDIDAHSEHGQIIIVCHKGSVNA. The helical transmembrane segment at 746–766 threads the bilayer; sequence FYCVLGYLAILAFGSFTLAFL. Residues 767-778 are Cytoplasmic-facing; sequence SRNLPGAFNEAK. The helical transmembrane segment at 779-799 threads the bilayer; the sequence is SITFSMLVFCSVWVTFIPVYH. Residues 800 to 806 are Extracellular-facing; that stretch reads STKGKVM. A helical membrane pass occupies residues 807–827; that stretch reads VAVEIFSTLASSAGMLGCIFV. Residues 828-856 are Cytoplasmic-facing; it reads PKCYTILFRQDQNSLEMIRVKSSSNVHVS.

Belongs to the G-protein coupled receptor 3 family. As to expression, expressed in the vomeronasal organ.

It localises to the cell membrane. Functionally, receptor for the Esp1 pheromone. Mediates the response to Esp1 which enhances female sexual receptive behavior (lordosis) upon male mounting, resulting in successful copulation. The chain is Vomeronasal type-2 receptor 116 from Mus musculus (Mouse).